A 398-amino-acid chain; its full sequence is tRNA pseudouridine synthase D (398 aa).

Asp-76 (nucleophile) is an active-site residue. Residues 151-360 (GVPNFFGEQR…MPGERRPLRI (210 aa)) enclose the TRUD domain.

The protein belongs to the pseudouridine synthase TruD family.

It catalyses the reaction uridine(13) in tRNA = pseudouridine(13) in tRNA. Its function is as follows. Responsible for synthesis of pseudouridine from uracil-13 in transfer RNAs. The sequence is that of tRNA pseudouridine synthase D from Syntrophotalea carbinolica (strain DSM 2380 / NBRC 103641 / GraBd1) (Pelobacter carbinolicus).